The primary structure comprises 50 residues: Large ribosomal subunit protein bL33 (50 aa).

Belongs to the bacterial ribosomal protein bL33 family.

The sequence is that of Large ribosomal subunit protein bL33 from Citrifermentans bemidjiense (strain ATCC BAA-1014 / DSM 16622 / JCM 12645 / Bem) (Geobacter bemidjiensis).